Reading from the N-terminus, the 242-residue chain is tRNA (guanine-N(7)-)-methyltransferase (242 aa).

Glu-66, Glu-91, Asp-118, and Asp-141 together coordinate S-adenosyl-L-methionine. Asp-141 is an active-site residue. Residues Lys-145, Asp-177, and 214 to 217 contribute to the substrate site; that span reads TKFE.

This sequence belongs to the class I-like SAM-binding methyltransferase superfamily. TrmB family. As to quaternary structure, monomer.

The enzyme catalyses guanosine(46) in tRNA + S-adenosyl-L-methionine = N(7)-methylguanosine(46) in tRNA + S-adenosyl-L-homocysteine. It participates in tRNA modification; N(7)-methylguanine-tRNA biosynthesis. Catalyzes the formation of N(7)-methylguanine at position 46 (m7G46) in tRNA. The polypeptide is tRNA (guanine-N(7)-)-methyltransferase (Buchnera aphidicola subsp. Baizongia pistaciae (strain Bp)).